A 215-amino-acid polypeptide reads, in one-letter code: Sodium channel regulatory subunit beta-3 (215 aa).

The N-terminal stretch at 1–22 (MPAFNRLFPLVSLVLIYWASVC) is a signal peptide. Residues 23–156 (FPVCVEVPSE…EEAGEDFTSV (134 aa)) lie on the Extracellular side of the membrane. One can recognise an Ig-like C2-type domain in the interval 24 to 138 (PVCVEVPSET…EAHRPFVKTT (115 aa)). 2 cysteine pairs are disulfide-bonded: C26–C48 and C45–C120. Residues N95, N109, N113, and N121 are each glycosylated (N-linked (GlcNAc...) asparagine). The helical transmembrane segment at 157–178 (VSEIMMYILLVFLTLWLLIEMI) threads the bilayer. Residues 179–215 (YCYRKVSKAEEAAQENASDYLAIPSENKENSAVPVEE) lie on the Cytoplasmic side of the membrane.

This sequence belongs to the sodium channel auxiliary subunit SCN3B (TC 8.A.17) family. A voltage-gated sodium (Nav) channel consists of an ion-conducting pore-forming alpha subunit functional on its own that is regulated by one or more beta subunits. Forms homodimers and homotrimers. SCN3B is non-covalently associated with alpha subunits and induces the formation of alpha subunit oligomers, including trimers. Interacts with SCN5A/Nav1.5; regulatory subunit of SCN5A/Nav1.5. Interacts with SCN7A/Nav2.1; probable regulatory subunit of SCN7A/Nav2.1. Interacts with SCN10A; regulatory subunit of SCN10A/Nav1.8. Interacts with NFASC; probably involved in targeting the sodium channels to the nodes of Ranvier. Intramolecular disulfide bonds favor the voltage-gated sodium channel oligomeric complex assembly. In terms of processing, N-glycosylated.

The protein localises to the cell membrane. Its function is as follows. Regulatory subunit of multiple voltage-gated sodium (Nav) channels directly mediating the depolarization of excitable membranes. Navs, also called VGSCs (voltage-gated sodium channels) or VDSCs (voltage-dependent sodium channels), operate by switching between closed and open conformations depending on the voltage difference across the membrane. In the open conformation they allow Na(+) ions to selectively pass through the pore, along their electrochemical gradient. The influx of Na+ ions provokes membrane depolarization, initiating the propagation of electrical signals throughout cells and tissues. The accessory beta subunits participate in localization and functional modulation of the Nav channels. Modulates the activity of SCN2A/Nav1.2, causing a hyperpolarizing shift in the voltage-dependence of inactivation of the channel and increasing the fraction of channels operating in the fast gating mode. Modulates the activity of SCN5A/Nav1.5. Could also regulate the atypical sodium channel SCN7A/Nav2.1. Modulates the activity of SCN10A/Nav1.8, regulating its oligomerization and accelerating the recovery from inactivation. This is Sodium channel regulatory subunit beta-3 from Macaca fascicularis (Crab-eating macaque).